Here is a 285-residue protein sequence, read N- to C-terminus: Homeobox protein Hox-A13b (285 aa).

The segment at residues 219–278 (GRKKRVPYTKVQLKELEREYAANKFITKDKRRRISAQTNLTERQVTIWFQNRRVKEKKVV) is a DNA-binding region (homeobox).

Belongs to the Abd-B homeobox family.

The protein resides in the nucleus. Its function is as follows. Sequence-specific transcription factor which is part of a developmental regulatory system that provides cells with specific positional identities on the anterior-posterior axis. This is Homeobox protein Hox-A13b (hoxa13b) from Takifugu rubripes (Japanese pufferfish).